A 152-amino-acid polypeptide reads, in one-letter code: Type-1 angiotensin II receptor-associated protein (152 aa).

Residues methionine 1–cysteine 23 lie on the Extracellular side of the membrane. The helical transmembrane segment at isoleucine 24–alanine 44 threads the bilayer. At valine 45–serine 55 the chain is on the cytoplasmic side. Residues methionine 56–tyrosine 76 traverse the membrane as a helical segment. Residues proline 77–arginine 86 are Extracellular-facing. A helical transmembrane segment spans residues phenylalanine 87–tyrosine 107. Topologically, residues histidine 108–tyrosine 152 are cytoplasmic. Residues serine 119 and serine 120 each carry the phosphoserine modification. Position 128 is a phosphothreonine (threonine 128). Serine 131 bears the Phosphoserine mark.

In terms of assembly, interacts with RACK1, and with the carboxy-terminal region of AGTR1.

Its subcellular location is the endoplasmic reticulum membrane. It localises to the golgi apparatus membrane. It is found in the cytoplasmic vesicle membrane. Appears to be a negative regulator of type-1 angiotensin II receptor-mediated signaling by regulating receptor internalization as well as mechanism of receptor desensitization such as phosphorylation. Also induces a decrease in cell proliferation and angiotensin II-stimulated transcriptional activity. This is Type-1 angiotensin II receptor-associated protein (AGTRAP) from Pongo abelii (Sumatran orangutan).